Consider the following 54-residue polypeptide: uncharacterized protein (54 aa).

The disordered stretch occupies residues 1 to 54; the sequence is MWTLKARKEHTGISGKPTARTDRHGSTRSGDSELQASARRFSRLPDRCGAQGVT.

This is an uncharacterized protein from Mycobacterium tuberculosis (strain ATCC 25618 / H37Rv).